A 420-amino-acid chain; its full sequence is MRIKDVLFVKGSSGFYFDDQKAIKSGAVTDGFTYKGKPLTPGFSRVRQGGEAVSIMLFLENGEIAVGDCVAVQYSGVDGRDPVFLADNFIEVLEEEIKPRLVGYNLVRFREAARYFTNLTDKRGKRYHTALRYGLTQALLDAVAKINRTTMAEVIAEEYGLDLTLNPVPLFAQSGDDRYINADKMILKRVDVLPHGLFNHPAKTGEEGKNLTEYALWLKQRIKTLGDHDYLPVFHFDVYGTLGTVFNDNLDRIADYLARLEEKVAPHPLQIEGPVDLGSKERQIEGLKYLQEKLITLGSKVIIVADEWCNNLSDIKEFVDAGAGGMVQIKSPDLGGVNDIIEAVLYAKEKGTGAYLGGSCNETDVSAKITVHVGLATGPAQLLVKPGMGVDEGLTIMRNEMMRTLAILQRNKVTFQKKVG.

Position 173 (Q173) interacts with (2S,3S)-3-methyl-L-aspartate. D237, E272, and D306 together coordinate Mg(2+). Q328 contacts (2S,3S)-3-methyl-L-aspartate. K330 serves as the catalytic Proton acceptor. A (2S,3S)-3-methyl-L-aspartate-binding site is contributed by 359 to 360 (SC).

As to quaternary structure, homodimer. Mg(2+) serves as cofactor.

It catalyses the reaction (2S,3S)-3-methyl-L-aspartate = mesaconate + NH4(+). Its pathway is amino-acid degradation; L-glutamate degradation via mesaconate pathway; acetate and pyruvate from L-glutamate: step 2/4. Its function is as follows. Involved in the methylaspartate cycle. Catalyzes the formation of the alpha,beta-unsaturated bond by the reversible anti elimination of ammonia from L-threo-beta-methylaspartate (L-threo-(2S,3S)-3-methylaspartate) to give mesaconate. It can also catalyze the amination of fumarate and ethylfumarate, and the deamination of hydroxylamine, hydrazine, methylamine and ethylamine. This is Methylaspartate ammonia-lyase 1 from Carboxydothermus hydrogenoformans (strain ATCC BAA-161 / DSM 6008 / Z-2901).